A 623-amino-acid chain; its full sequence is Glutathione import ATP-binding protein GsiA (623 aa).

2 ABC transporter domains span residues 18 to 272 (VRNL…QGLL) and 317 to 567 (LQVS…RKLM). ATP-binding positions include 52–59 (GESGSGKS) and 360–367 (GESGCGKS).

This sequence belongs to the ABC transporter superfamily. Glutathione importer (TC 3.A.1.5.11) family. The complex is composed of two ATP-binding proteins (GsiA), two transmembrane proteins (GsiC and GsiD) and a solute-binding protein (GsiB).

The protein localises to the cell inner membrane. It catalyses the reaction glutathione(out) + ATP + H2O = glutathione(in) + ADP + phosphate + H(+). Its function is as follows. Part of the ABC transporter complex GsiABCD involved in glutathione import. Responsible for energy coupling to the transport system. This chain is Glutathione import ATP-binding protein GsiA, found in Pectobacterium atrosepticum (strain SCRI 1043 / ATCC BAA-672) (Erwinia carotovora subsp. atroseptica).